The sequence spans 136 residues: Transcription antitermination protein NusB (136 aa).

The protein belongs to the NusB family.

Involved in transcription antitermination. Required for transcription of ribosomal RNA (rRNA) genes. Binds specifically to the boxA antiterminator sequence of the ribosomal RNA (rrn) operons. This is Transcription antitermination protein NusB from Pseudoalteromonas translucida (strain TAC 125).